We begin with the raw amino-acid sequence, 91 residues long: Cell division topological specificity factor (91 aa).

The protein belongs to the MinE family.

In terms of biological role, prevents the cell division inhibition by proteins MinC and MinD at internal division sites while permitting inhibition at polar sites. This ensures cell division at the proper site by restricting the formation of a division septum at the midpoint of the long axis of the cell. The chain is Cell division topological specificity factor from Wigglesworthia glossinidia brevipalpis.